A 327-amino-acid polypeptide reads, in one-letter code: Undecaprenyl-phosphate 4-deoxy-4-formamido-L-arabinose transferase (327 aa).

2 helical membrane-spanning segments follow: residues 235–255 (LLSLVGSAIALLGFTFSVLLV) and 270–290 (VFTLFAVLFMFIGAQFVGMGL).

The protein belongs to the glycosyltransferase 2 family.

It is found in the cell inner membrane. It catalyses the reaction UDP-4-deoxy-4-formamido-beta-L-arabinose + di-trans,octa-cis-undecaprenyl phosphate = 4-deoxy-4-formamido-alpha-L-arabinopyranosyl di-trans,octa-cis-undecaprenyl phosphate + UDP. It functions in the pathway glycolipid biosynthesis; 4-amino-4-deoxy-alpha-L-arabinose undecaprenyl phosphate biosynthesis; 4-amino-4-deoxy-alpha-L-arabinose undecaprenyl phosphate from UDP-4-deoxy-4-formamido-beta-L-arabinose and undecaprenyl phosphate: step 1/2. Its pathway is bacterial outer membrane biogenesis; lipopolysaccharide biosynthesis. In terms of biological role, catalyzes the transfer of 4-deoxy-4-formamido-L-arabinose from UDP to undecaprenyl phosphate. The modified arabinose is attached to lipid A and is required for resistance to polymyxin and cationic antimicrobial peptides. This Yersinia pestis bv. Antiqua (strain Antiqua) protein is Undecaprenyl-phosphate 4-deoxy-4-formamido-L-arabinose transferase.